A 158-amino-acid chain; its full sequence is Transcription antitermination protein NusB (158 aa).

Over residues 1–13 (MSEAGDTSPQPGK) the composition is skewed to polar residues. The disordered stretch occupies residues 1–24 (MSEAGDTSPQPGKTGQPKAGDRRR).

This sequence belongs to the NusB family.

In terms of biological role, involved in transcription antitermination. Required for transcription of ribosomal RNA (rRNA) genes. Binds specifically to the boxA antiterminator sequence of the ribosomal RNA (rrn) operons. The protein is Transcription antitermination protein NusB of Marinobacter nauticus (strain ATCC 700491 / DSM 11845 / VT8) (Marinobacter aquaeolei).